The following is an 810-amino-acid chain: RING finger protein unkempt homolog (810 aa).

A disordered region spans residues 1 to 24; it reads MSKGPGPGGSAASSAPPAATAQVL. Over residues 10-19 the composition is skewed to low complexity; it reads SAASSAPPAA. C3H1-type zinc fingers lie at residues 84 to 113, 124 to 154, 215 to 241, 251 to 285, and 293 to 321; these read YSPD…HRTT, YYKT…HGPH, NYKT…HNSK, KYRS…HTRT, and IYKS…HIEP. A disordered region spans residues 239 to 265; that stretch reads NSKDRRRSPRKHKYRSSPCPNVKHGDE. Ser240 is subject to Phosphoserine. Residues 241-253 are compositionally biased toward basic residues; it reads KDRRRSPRKHKYR. A phosphoserine mark is found at Ser374, Ser378, Ser385, and Ser394. Residues 478-497 form a disordered region; sequence TSSLAATPPSPAGTNSTPGM. A Phosphoserine modification is found at Ser631. Positions 643–727 form a coiled coil; sequence GAAELARLRQ…ERLHTVPEAQ (85 aa). The segment at 766-801 adopts an RING-type; degenerate zinc-finger fold; it reads SVKCLKCQEQTRAVLPCQHAVLCELCAEGSECPVCQ.

The protein belongs to the unkempt family.

It is found in the cytoplasm. Functionally, sequence-specific RNA-binding protein which plays an important role in the establishment and maintenance of the early morphology of cortical neurons during embryonic development. Acts as a translation repressor and controls a translationally regulated cell morphology program to ensure proper structuring of the nervous system. Translational control depends on recognition of its binding element within target mRNAs which consists of a mandatory UAG trimer upstream of a U/A-rich motif. Associated with polysomes. In Mus musculus (Mouse), this protein is RING finger protein unkempt homolog (Unk).